Here is a 979-residue protein sequence, read N- to C-terminus: MHC class II regulatory factor RFX1 (979 aa).

3 disordered regions span residues 1-136 (MATQ…QVVQ), 181-227 (QSAA…PTGT), and 370-405 (TSTG…STGG). Positions 12–44 (APPPSQPPQAPPQAQPQPPPPPPPAAPQPPQPP) are enriched in pro residues. Over residues 45–73 (TAAATPQPQYVTELQSPQPQAQPPGGQKQ) the composition is skewed to low complexity. Ser60 carries the post-translational modification Phosphoserine. The segment covering 81–96 (VPAPSQPTGAPTPSPA) has biased composition (pro residues). A compositionally biased stretch (polar residues) spans 114–126 (ETVSEASPGSTAS). Low complexity predominate over residues 127–136 (QTGVPTQVVQ). 2 stretches are compositionally biased toward polar residues: residues 190–203 (GQVS…QQVH) and 209–220 (SPVQANSSSSKT). The span at 370–379 (TSTGAGASNS) shows a compositional bias: low complexity. A compositionally biased stretch (gly residues) spans 380-405 (SGGGGSGGGGGGGGGGGGGGSGSTGG). The segment at residues 438 to 513 (TVQWLLDNYE…YHYYGLRIKA (76 aa)) is a DNA-binding region (RFX-type winged-helix). Residues 744–979 (FAQTLRRYTS…GLFVQALPSS (236 aa)) form a necessary for dimerization region. Residues 915–960 (SLNPLDPDKDEEEEEEEESEDELPQDISLAAGGESPALGPETLEPP) form a disordered region. Positions 922 to 938 (DKDEEEEEEEESEDELP) are enriched in acidic residues. 2 positions are modified to phosphoserine: Ser978 and Ser979.

Belongs to the RFX family. Homodimer; binds DNA as a homodimer. Heterodimer; heterodimerizes with RFX2 and RFX3.

It localises to the nucleus. In terms of biological role, regulatory factor essential for MHC class II genes expression. Binds to the X boxes of MHC class II genes. Also binds to an inverted repeat (ENH1) required for hepatitis B virus genes expression and to the most upstream element (alpha) of the RPL30 promoter. The chain is MHC class II regulatory factor RFX1 (RFX1) from Homo sapiens (Human).